A 196-amino-acid chain; its full sequence is Holliday junction branch migration complex subunit RuvA (196 aa).

The interval 1–63 (MIEYIKGEIV…EDAHLLFGFA (63 aa)) is domain I. Positions 64–142 (EKIERELFLL…PMESMAGNLP (79 aa)) are domain II. The segment at 142–146 (PEASV) is flexible linker. The domain III stretch occupies residues 147 to 196 (SNGAVTEEAVAALVMLGFQKAASQKAVSAILKGSPTLAVEQVIKTALRML).

It belongs to the RuvA family. In terms of assembly, homotetramer. Forms an RuvA(8)-RuvB(12)-Holliday junction (HJ) complex. HJ DNA is sandwiched between 2 RuvA tetramers; dsDNA enters through RuvA and exits via RuvB. An RuvB hexamer assembles on each DNA strand where it exits the tetramer. Each RuvB hexamer is contacted by two RuvA subunits (via domain III) on 2 adjacent RuvB subunits; this complex drives branch migration. In the full resolvosome a probable DNA-RuvA(4)-RuvB(12)-RuvC(2) complex forms which resolves the HJ.

It is found in the cytoplasm. In terms of biological role, the RuvA-RuvB-RuvC complex processes Holliday junction (HJ) DNA during genetic recombination and DNA repair, while the RuvA-RuvB complex plays an important role in the rescue of blocked DNA replication forks via replication fork reversal (RFR). RuvA specifically binds to HJ cruciform DNA, conferring on it an open structure. The RuvB hexamer acts as an ATP-dependent pump, pulling dsDNA into and through the RuvAB complex. HJ branch migration allows RuvC to scan DNA until it finds its consensus sequence, where it cleaves and resolves the cruciform DNA. The sequence is that of Holliday junction branch migration complex subunit RuvA from Parabacteroides distasonis (strain ATCC 8503 / DSM 20701 / CIP 104284 / JCM 5825 / NCTC 11152).